We begin with the raw amino-acid sequence, 328 residues long: Malate dehydrogenase (328 aa).

Position 11 to 17 (11 to 17 (GAAGQIG)) interacts with NAD(+). Substrate-binding residues include arginine 94 and arginine 100. NAD(+)-binding positions include asparagine 107, glutamine 114, and 131 to 133 (VGN). Substrate-binding residues include asparagine 133 and arginine 164. Residue histidine 189 is the Proton acceptor of the active site.

Belongs to the LDH/MDH superfamily. MDH type 2 family.

It catalyses the reaction (S)-malate + NAD(+) = oxaloacetate + NADH + H(+). Its function is as follows. Catalyzes the reversible oxidation of malate to oxaloacetate. The protein is Malate dehydrogenase of Xanthomonas campestris pv. campestris (strain 8004).